Here is a 239-residue protein sequence, read N- to C-terminus: Myogenic factor 6 (239 aa).

The disordered stretch occupies residues 28-59 (PGVSPLYEGNDSPLSPGQDPVPSETGCESSGE). The bHLH domain maps to 92–143 (DRRKAATLRERRRLKKINEAFDALKKKTVPNPNQRLPKVEILRSAINYIEKL). A compositionally biased stretch (polar residues) spans 182–196 (CQSWQENPDHSSSQM). Residues 182–239 (CQSWQENPDHSSSQMAGHREGAVLESSESSSLRRLSSIVDSISTEEPKARCPSQISEK) are disordered. Residues 204–223 (VLESSESSSLRRLSSIVDSI) are compositionally biased toward low complexity.

As to quaternary structure, efficient DNA binding requires dimerization with another bHLH protein.

The protein resides in the nucleus. Its function is as follows. Involved in muscle differentiation (myogenic factor). Induces fibroblasts to differentiate into myoblasts. Probable sequence specific DNA-binding protein. The sequence is that of Myogenic factor 6 (myf6) from Danio rerio (Zebrafish).